The chain runs to 262 residues: Small ribosomal subunit protein uS2 (262 aa).

This sequence belongs to the universal ribosomal protein uS2 family.

The chain is Small ribosomal subunit protein uS2 from Borreliella afzelii (strain PKo) (Borrelia afzelii).